The chain runs to 82 residues: ATP synthase subunit c (82 aa).

The next 2 helical transmembrane spans lie at 7-27 (AASVVAAGLAVGLGAIGPGIG) and 57-77 (FAFMESLTIYGLVVALVLLFA).

Belongs to the ATPase C chain family. In terms of assembly, F-type ATPases have 2 components, F(1) - the catalytic core - and F(0) - the membrane proton channel. F(1) has five subunits: alpha(3), beta(3), gamma(1), delta(1), epsilon(1). F(0) has four main subunits: a(1), b(1), b'(1) and c(10-14). The alpha and beta chains form an alternating ring which encloses part of the gamma chain. F(1) is attached to F(0) by a central stalk formed by the gamma and epsilon chains, while a peripheral stalk is formed by the delta, b and b' chains.

The protein resides in the cellular thylakoid membrane. Its function is as follows. F(1)F(0) ATP synthase produces ATP from ADP in the presence of a proton or sodium gradient. F-type ATPases consist of two structural domains, F(1) containing the extramembraneous catalytic core and F(0) containing the membrane proton channel, linked together by a central stalk and a peripheral stalk. During catalysis, ATP synthesis in the catalytic domain of F(1) is coupled via a rotary mechanism of the central stalk subunits to proton translocation. Key component of the F(0) channel; it plays a direct role in translocation across the membrane. A homomeric c-ring of between 10-14 subunits forms the central stalk rotor element with the F(1) delta and epsilon subunits. The protein is ATP synthase subunit c of Prochlorococcus marinus (strain NATL1A).